A 383-amino-acid polypeptide reads, in one-letter code: Cathepsin D (383 aa).

The first 18 residues, 1–18 (MKLLILTLFLATIVLAQA), serve as a signal peptide directing secretion. The propeptide occupies 19-48 (LTVPLNFHQASRESRRRVPQKWSNRLSALN). One can recognise a Peptidase A1 domain in the interval 63–378 (YYGAITIGTP…DFGNKQVGFA (316 aa)). Asp81 is an active-site residue. Cys94 and Cys101 are oxidised to a cystine. N-linked (GlcNAc...) asparagine glycosylation is found at Asn118 and Asn238. Cysteines 259 and 263 form a disulfide. Asp268 is an active-site residue. A disulfide bridge links Cys302 with Cys339. A glycan (N-linked (GlcNAc...) asparagine) is linked at Asn310.

Belongs to the peptidase A1 family. In terms of assembly, monomer. N-glycosylated on 2 out of the 3 potential sites. Glycans contain sulfated Mannose.

The protein resides in the lysosome. It localises to the secreted. It catalyses the reaction Specificity similar to, but narrower than, that of pepsin A. Does not cleave the 4-Gln-|-His-5 bond in B chain of insulin.. Functionally, protease that may act during cell growth and/or development. This chain is Cathepsin D (ctsD), found in Dictyostelium discoideum (Social amoeba).